The chain runs to 138 residues: Basic leucine zipper 8 (138 aa).

A disordered region spans residues 30-67; the sequence is NLPATSDDSSRTAEDNERKRRRKVSNRESARRSRMRKQ. Over residues 37-47 the composition is skewed to basic and acidic residues; that stretch reads DSSRTAEDNER. A bZIP domain is found at 45-108; it reads NERKRRRKVS…EKVIEENMKL (64 aa). The basic motif stretch occupies residues 47-68; it reads RKRRRKVSNRESARRSRMRKQR. A Nuclear localization signal motif is present at residues 48 to 55; that stretch reads KRRRKVSN. The tract at residues 73 to 87 is leucine-zipper; it reads LWSMLVQLINKNKSL.

This sequence belongs to the bZIP family. Homodimer.

Its subcellular location is the nucleus. In Arabidopsis thaliana (Mouse-ear cress), this protein is Basic leucine zipper 8.